Reading from the N-terminus, the 267-residue chain is Alkaline ceramidase 3 (267 aa).

The Cytoplasmic portion of the chain corresponds to 1–33 (MAPAVDRKGYWGPTTSTLDWCEENYVVTLFVAE). Residues D19, W20, E22, N24, and E33 each coordinate Ca(2+). The helical transmembrane segment at 34–55 (FWNTVSNLIMIIPPIFGAIQGI) threads the bilayer. The Lumenal segment spans residues 56–61 (RDRLEK). Residues 62-82 (RYIAAYLALTVVGMGSWCFHM) traverse the membrane as a helical segment. Position 81 (H81) interacts with Zn(2+). The Cytoplasmic portion of the chain corresponds to 83–87 (TLKYE). The helical transmembrane segment at 88–108 (MQLLDELPMIYSCCIFVYCMF) threads the bilayer. The Lumenal portion of the chain corresponds to 109-118 (ECFKTKSSIN). The chain crosses the membrane as a helical span at residues 119 to 139 (YHLLFTLFLYSLTVTTIYLKV). Residues 140–141 (KE) are Cytoplasmic-facing. A helical transmembrane segment spans residues 142–162 (PIFHQVMYGMLVFTLVLRSIY). The Lumenal portion of the chain corresponds to 163–173 (IVTWVYPWLRG). Residues 174 to 194 (LGYTSLTVFLLGFLLWNIDNI) form a helical membrane-spanning segment. Topologically, residues 195-215 (FCDSLRNFRKRVPPVLGVTTQ) are cytoplasmic. Residues 216–236 (FHAWWHILTGLGSYLHILFSL) form a helical membrane-spanning segment. H217 and H221 together coordinate Zn(2+). Over 237-267 (YTRTLYLRYRPKVKFLFGIWPAVMFEPQRKH) the chain is Lumenal.

Belongs to the alkaline ceramidase family. Zn(2+) is required as a cofactor. In terms of tissue distribution, up-regulated with age in cerebeLlum and cerebrum.

It is found in the endoplasmic reticulum membrane. The protein localises to the golgi apparatus membrane. It carries out the reaction an N-acyl-(4R)-4-hydroxysphinganine + H2O = (4R)-hydroxysphinganine + a fatty acid. The enzyme catalyses N-(5Z,8Z,11Z,14Z-eicosatetraenoyl)-sphing-4-enine + H2O = sphing-4-enine + (5Z,8Z,11Z,14Z)-eicosatetraenoate. The catalysed reaction is N-(5Z,8Z,11Z,14Z-eicosatetraenoyl)-sphinganine + H2O = sphinganine + (5Z,8Z,11Z,14Z)-eicosatetraenoate. It catalyses the reaction N-(5Z,8Z,11Z,14Z-eicosatetraenoyl)-(4R)-hydroxysphinganine + H2O = (4R)-hydroxysphinganine + (5Z,8Z,11Z,14Z)-eicosatetraenoate. It carries out the reaction N-(11Z-eicosenoyl)-sphing-4-enine + H2O = (11Z)-eicosenoate + sphing-4-enine. The enzyme catalyses N-(11Z-eicosenoyl)-sphinganine + H2O = (11Z)-eicosenoate + sphinganine. The catalysed reaction is N-(11Z-eicosenoyl)-(4R)-hydroxysphinganine + H2O = (11Z)-eicosenoate + (4R)-hydroxysphinganine. It catalyses the reaction N-(9Z-octadecenoyl)-sphing-4-enine + H2O = sphing-4-enine + (9Z)-octadecenoate. It carries out the reaction N-(9Z-octadecenoyl)-sphinganine + H2O = sphinganine + (9Z)-octadecenoate. The enzyme catalyses N-(9Z-octadecenoyl)-(4R)-hydroxysphinganine + H2O = (4R)-hydroxysphinganine + (9Z)-octadecenoate. The catalysed reaction is an N-acylsphing-4-enine + H2O = sphing-4-enine + a fatty acid. It catalyses the reaction an N-acylsphinganine + H2O = sphinganine + a fatty acid. It participates in lipid metabolism; sphingolipid metabolism. Activated by Ca(2+) and inhibited by Zn(2+). Its function is as follows. Endoplasmic reticulum and Golgi ceramidase that catalyzes the hydrolysis of unsaturated long-chain C18:1-, C20:1- and C20:4-ceramides, dihydroceramides and phytoceramides into sphingoid bases like sphingosine and free fatty acids at alkaline pH. Ceramides, sphingosine, and its phosphorylated form sphingosine-1-phosphate are bioactive lipids that mediate cellular signaling pathways regulating several biological processes including cell proliferation, apoptosis and differentiation. Controls the generation of sphingosine in erythrocytes, and thereby sphingosine-1-phosphate in plasma. Through the regulation of ceramides and sphingosine-1-phosphate homeostasis in the brain may play a role in neurons survival and function. By regulating the levels of pro-inflammatory ceramides in immune cells and tissues, may modulate the inflammatory response. The chain is Alkaline ceramidase 3 (Acer3) from Mus musculus (Mouse).